A 920-amino-acid chain; its full sequence is Probable crossover junction endonuclease mus81 (920 aa).

Disordered stretches follow at residues 90–190 (TSHP…KKKK), 265–297 (NNNN…NDNH), 335–376 (LNKS…IRIT), 457–490 (KLKS…IVNN), 505–560 (SEIN…DYDK), and 595–621 (PKVI…TSKS). Composition is skewed to low complexity over residues 108 to 142 (NRNN…NNNS) and 152 to 165 (NNNT…TQSN). Over residues 166–178 (LIGTESPSKNQNK) the composition is skewed to polar residues. Composition is skewed to low complexity over residues 265-282 (NNNN…NSDI) and 351-372 (HNTT…NNNN). Residues 457–467 (KLKSPFKKRFK) show a composition bias toward basic residues. 2 stretches are compositionally biased toward low complexity: residues 471–490 (SPSS…IVNN) and 505–539 (SEIN…NNNN). A compositionally biased stretch (acidic residues) spans 540–556 (NDDDDDFDLTETEDEKD). Over residues 607-620 (QSTQSTSTSTSTSK) the composition is skewed to low complexity. Residues 635–731 (KCIIDNREVK…NIIYLIEGIV (97 aa)) enclose the ERCC4 domain.

This sequence belongs to the XPF family. Interacts with eme1. It depends on Mg(2+) as a cofactor.

The protein localises to the nucleus. Component of a DNA structure-specific endonuclease with substrate preference for branched DNA structures with a 5'-end at the branch nick. May be required in mitosis for the processing of stalled or collapsed replication fork intermediates. May be required in meiosis for the repair of meiosis-specific double strand breaks subsequent to single-end invasion (SEI). The sequence is that of Probable crossover junction endonuclease mus81 (mus81) from Dictyostelium discoideum (Social amoeba).